Here is a 353-residue protein sequence, read N- to C-terminus: Fasciclin-like arabinogalactan protein 21 (353 aa).

Positions 1–28 (MGCCSSDCFVYFILSIALAFMAISTTLR) are cleaved as a signal peptide. Residues asparagine 51, asparagine 81, asparagine 94, asparagine 200, asparagine 249, and asparagine 315 are each glycosylated (N-linked (GlcNAc...) asparagine). In terms of domain architecture, FAS1 1 spans 83-181 (TLFAIEDASF…HGVIGPFSPL (99 aa)). An FAS1 2 domain is found at 254 to 352 (TILATPNLVS…GISHTLEIPH (99 aa)).

Belongs to the fasciclin-like AGP family.

Its subcellular location is the secreted. Its function is as follows. May be a cell surface adhesion protein. The polypeptide is Fasciclin-like arabinogalactan protein 21 (FLA21) (Arabidopsis thaliana (Mouse-ear cress)).